The following is a 323-amino-acid chain: Transaldolase (323 aa).

Lys-131 acts as the Schiff-base intermediate with substrate in catalysis.

Belongs to the transaldolase family. Type 1 subfamily. In terms of assembly, homodimer.

The protein resides in the cytoplasm. It carries out the reaction D-sedoheptulose 7-phosphate + D-glyceraldehyde 3-phosphate = D-erythrose 4-phosphate + beta-D-fructose 6-phosphate. The protein operates within carbohydrate degradation; pentose phosphate pathway; D-glyceraldehyde 3-phosphate and beta-D-fructose 6-phosphate from D-ribose 5-phosphate and D-xylulose 5-phosphate (non-oxidative stage): step 2/3. Functionally, transaldolase is important for the balance of metabolites in the pentose-phosphate pathway. The protein is Transaldolase of Blochmanniella floridana.